Here is a 196-residue protein sequence, read N- to C-terminus: Holliday junction branch migration complex subunit RuvA (196 aa).

The domain I stretch occupies residues 1-62 (MYEYINGLIT…ENDISLYGFI (62 aa)). Residues 63 to 141 (DADEKALFNK…ELASKTGMVD (79 aa)) form a domain II region. The interval 142–148 (SSSNPEQ) is flexible linker. Residues 148-196 (QSQALDDALEALLALGYTAKDVKAVAQIIGRNSDTTDGYIRSALKLLVK) are domain III.

Belongs to the RuvA family. As to quaternary structure, homotetramer. Forms an RuvA(8)-RuvB(12)-Holliday junction (HJ) complex. HJ DNA is sandwiched between 2 RuvA tetramers; dsDNA enters through RuvA and exits via RuvB. An RuvB hexamer assembles on each DNA strand where it exits the tetramer. Each RuvB hexamer is contacted by two RuvA subunits (via domain III) on 2 adjacent RuvB subunits; this complex drives branch migration. In the full resolvosome a probable DNA-RuvA(4)-RuvB(12)-RuvC(2) complex forms which resolves the HJ.

The protein resides in the cytoplasm. In terms of biological role, the RuvA-RuvB-RuvC complex processes Holliday junction (HJ) DNA during genetic recombination and DNA repair, while the RuvA-RuvB complex plays an important role in the rescue of blocked DNA replication forks via replication fork reversal (RFR). RuvA specifically binds to HJ cruciform DNA, conferring on it an open structure. The RuvB hexamer acts as an ATP-dependent pump, pulling dsDNA into and through the RuvAB complex. HJ branch migration allows RuvC to scan DNA until it finds its consensus sequence, where it cleaves and resolves the cruciform DNA. In Leuconostoc mesenteroides subsp. mesenteroides (strain ATCC 8293 / DSM 20343 / BCRC 11652 / CCM 1803 / JCM 6124 / NCDO 523 / NBRC 100496 / NCIMB 8023 / NCTC 12954 / NRRL B-1118 / 37Y), this protein is Holliday junction branch migration complex subunit RuvA.